The chain runs to 395 residues: Cyclin-A2 (395 aa).

Residues 1-93 form a disordered region; sequence MLAEQENQEN…EEAADAPGLR (93 aa). Low complexity predominate over residues 27–60; sequence ALGLLRGGPARPGPAAQAARNGEGRGAAAGQQQQ.

Belongs to the cyclin family. Cyclin AB subfamily. Interacts with the CDK1 and CDK2 protein kinases to form serine/threonine kinase holoenzyme complexes.

The protein resides in the nucleus. It localises to the cytoplasm. Its function is as follows. Cyclin which controls both the G1/S and the G2/M transition phases of the cell cycle. Functions through the formation of specific serine/threonine kinase holoenzyme complexes with the cyclin-dependent protein kinases CDK1 and CDK2. The cyclin subunit confers the substrate specificity of these complexes and differentially interacts with and activates CDK1 and CDK2 throughout the cell cycle. The chain is Cyclin-A2 from Gallus gallus (Chicken).